The following is a 293-amino-acid chain: Protease HtpX (293 aa).

Transmembrane regions (helical) follow at residues 4-24 (IALF…VLSL) and 34-54 (GLMI…LLMS). His139 lines the Zn(2+) pocket. Glu140 is a catalytic residue. His143 is a binding site for Zn(2+). The next 2 helical transmembrane spans lie at 158 to 178 (IVNT…SGFL) and 193 to 213 (MVYF…ASII). Glu222 lines the Zn(2+) pocket.

Belongs to the peptidase M48B family. Zn(2+) serves as cofactor.

The protein resides in the cell inner membrane. This chain is Protease HtpX, found in Pectobacterium atrosepticum (strain SCRI 1043 / ATCC BAA-672) (Erwinia carotovora subsp. atroseptica).